Reading from the N-terminus, the 106-residue chain is UPF0213 protein VPA1222 (106 aa).

Residues 7–82 (QHWSVYLIRN…KQLTKSKKEQ (76 aa)) enclose the GIY-YIG domain.

Belongs to the UPF0213 family.

The polypeptide is UPF0213 protein VPA1222 (Vibrio parahaemolyticus serotype O3:K6 (strain RIMD 2210633)).